The primary structure comprises 191 residues: Peptidyl-tRNA hydrolase (191 aa).

Tyr-16 contacts tRNA. The active-site Proton acceptor is His-21. Positions 66, 68, and 114 each coordinate tRNA.

The protein belongs to the PTH family. As to quaternary structure, monomer.

The protein localises to the cytoplasm. The catalysed reaction is an N-acyl-L-alpha-aminoacyl-tRNA + H2O = an N-acyl-L-amino acid + a tRNA + H(+). Its function is as follows. Hydrolyzes ribosome-free peptidyl-tRNAs (with 1 or more amino acids incorporated), which drop off the ribosome during protein synthesis, or as a result of ribosome stalling. In terms of biological role, catalyzes the release of premature peptidyl moieties from peptidyl-tRNA molecules trapped in stalled 50S ribosomal subunits, and thus maintains levels of free tRNAs and 50S ribosomes. The sequence is that of Peptidyl-tRNA hydrolase from Geotalea daltonii (strain DSM 22248 / JCM 15807 / FRC-32) (Geobacter daltonii).